Here is an 887-residue protein sequence, read N- to C-terminus: ABC transporter A family member 10 (887 aa).

Helical transmembrane passes span 38–58 (GIQY…VITL), 198–218 (YLYV…LLVT), 245–265 (IIIV…VVLY), 277–297 (VMLF…GIIL), 309–329 (AISS…QFYL), 335–355 (SSWL…EFLY), and 376–396 (ISFL…WYIT). A compositionally biased stretch (low complexity) spans 443 to 469 (NNCNNNNTSPSSSSSSQSSPLNKPLLS). A disordered region spans residues 443–474 (NNCNNNNTSPSSSSSSQSSPLNKPLLSGDSDD). One can recognise an ABC transporter domain in the interval 481 to 728 (IRLVNLKKTY…FNLGYILTIV (248 aa)). 519–526 (GQNGSGKT) is an ATP binding site. The segment covering 774-797 (NNNNNENNSNNSDGSSSSSDSSSS) has biased composition (low complexity). The tract at residues 774–799 (NNNNNENNSNNSDGSSSSSDSSSSKD) is disordered.

Belongs to the ABC transporter superfamily. ABCA family.

The protein resides in the membrane. This Dictyostelium discoideum (Social amoeba) protein is ABC transporter A family member 10 (abcA10).